The primary structure comprises 390 residues: tRNA(Met) cytidine acetate ligase (390 aa).

ATP is bound by residues 7 to 20 (VVEYNPFHNGHKLH), glycine 101, asparagine 162, and arginine 187.

It belongs to the TmcAL family.

The protein localises to the cytoplasm. It carries out the reaction cytidine(34) in elongator tRNA(Met) + acetate + ATP = N(4)-acetylcytidine(34) in elongator tRNA(Met) + AMP + diphosphate. Catalyzes the formation of N(4)-acetylcytidine (ac(4)C) at the wobble position of elongator tRNA(Met), using acetate and ATP as substrates. First activates an acetate ion to form acetyladenylate (Ac-AMP) and then transfers the acetyl group to tRNA to form ac(4)C34. This is tRNA(Met) cytidine acetate ligase from Listeria monocytogenes serotype 4b (strain CLIP80459).